The chain runs to 150 residues: Globin-5 (150 aa).

Residues 11-150 (PLSAAEKTKI…MICILLRSAY (140 aa)) enclose the Globin domain. Positions 74 and 106 each coordinate heme b.

It belongs to the globin family. In terms of assembly, monomer at high oxygen tension and high pH and dimeric at low oxygen tension and lower pH.

This Petromyzon marinus (Sea lamprey) protein is Globin-5.